Consider the following 1171-residue polypeptide: Protein diaphanous homolog 3 (1171 aa).

A compositionally biased stretch (basic and acidic residues) spans 1 to 15; it reads MERHRARALGRDSKS. A disordered region spans residues 1-40; that stretch reads MERHRARALGRDSKSSRRKGLQSAPPAGPYEPGEKRPKLH. The Nuclear localization signal signature appears at 16-39; sequence SRRKGLQSAPPAGPYEPGEKRPKL. Thr47 is modified (phosphothreonine). Ser56 carries the phosphoserine modification. Positions 60–95 are disordered; it reads PGSKKERPPLPHLKTVSGISDSSSLSSETMENNPKA. Residues 76–86 show a composition bias toward low complexity; the sequence is SGISDSSSLSS. Residues 93 to 455 enclose the GBD/FH3 domain; that stretch reads PKALPESEVL…QIVLHRDGTD (363 aa). Ser154 bears the Phosphoserine mark. Coiled-coil stretches lie at residues 373-403 and 478-533; these read EHKE…YSML and QAKL…FGAL. The interval 532–601 is disordered; it reads ALPPGTKIPL…PPPPLGFLGG (70 aa). Residues 540–610 form the FH1 domain; sequence PLQPSVEGEA…GQSSIPLNLP (71 aa). The span at 553 to 596 shows a compositional bias: pro residues; the sequence is ALPPAPPALSGGVPPPPPPPPPPPPPLPGMPMPFGGPVPPPPPL. Ser604 carries the post-translational modification Phosphoserine. Residues 615-1013 enclose the FH2 domain; that stretch reads PKKEFKPEIS…EKRARIAKER (399 aa). Coiled-coil stretches lie at residues 887-918 and 988-1038; these read DKAS…LETF and MLAL…GDET. Positions 1036-1066 constitute a DAD domain; the sequence is DETGVMDSLLEALQSGAAFRDRRKRTPKLKD. A phosphoserine mark is found at Ser1072 and Ser1157. The short motif at 1162–1171 is the Nuclear export signal element; the sequence is EALLARLRAL.

This sequence belongs to the formin homology family. Diaphanous subfamily. Ubiquitinated.

It localises to the cytoplasm. The protein localises to the nucleus. In terms of biological role, actin nucleation and elongation factor required for the assembly of F-actin structures, such as actin cables and stress fibers. Required for cytokinesis, stress fiber formation and transcriptional activation of the serum response factor. Binds to GTP-bound form of Rho and to profilin: acts in a Rho-dependent manner to recruit profilin to the membrane, where it promotes actin polymerization. DFR proteins couple Rho and Src tyrosine kinase during signaling and the regulation of actin dynamics. Also acts as an actin nucleation and elongation factor in the nucleus by promoting nuclear actin polymerization inside the nucleus to drive serum-dependent SRF-MRTFA activity. The protein is Protein diaphanous homolog 3 (Diaph3) of Mus musculus (Mouse).